Here is a 257-residue protein sequence, read N- to C-terminus: MSGGGKDRIAVFPSRMAQTLMKTRLKGAQKGHSLLKKKADALNLRFRDILRKIVENKVLMGEVMKEAAFSLAEAKFTAGDFSHTVIQNVSQAQYRVRMKKENVVGVFLPVFDAYQDGPDAYDLTGLGKGGANIARLKKNYNKAIELLVELATLQTCFITLDEAIKVTNRRVNAIEHVIIPRIENTLTYIVTELDEMEREEFFRMKKIQANKKKLKEQEAAQKALEGPGPGEDAAHSENNPPRNLLASEEDNLPVLFN.

A disordered region spans residues 215 to 257; that stretch reads KEQEAAQKALEGPGPGEDAAHSENNPPRNLLASEEDNLPVLFN.

It belongs to the V-ATPase D subunit family. In terms of assembly, V-ATPase is a heteromultimeric enzyme made up of two complexes: the ATP-hydrolytic V1 complex and the proton translocation V0 complex. The V1 complex consists of three catalytic AB heterodimers that form a heterohexamer, three peripheral stalks each consisting of EG heterodimers, one central rotor including subunits D and F, and the regulatory subunits C and H. The proton translocation complex V0 consists of the proton transport subunit a, a ring of proteolipid subunits c9c'', rotary subunit d, subunits e and f, and the accessory subunits vah-19/Ac45 and vah-20/PRR.

In terms of biological role, subunit of the V1 complex of vacuolar(H+)-ATPase (V-ATPase), a multisubunit enzyme composed of a peripheral complex (V1) that hydrolyzes ATP and a membrane integral complex (V0) that translocates protons. V-ATPase is responsible for acidifying and maintaining the pH of intracellular compartments and in some cell types, is targeted to the plasma membrane, where it is responsible for acidifying the extracellular environment. The sequence is that of V-type proton ATPase subunit D from Caenorhabditis elegans.